Here is a 207-residue protein sequence, read N- to C-terminus: dTTP/UTP pyrophosphatase (207 aa).

Catalysis depends on D87, which acts as the Proton acceptor.

Belongs to the Maf family. YhdE subfamily. The cofactor is a divalent metal cation.

The protein localises to the cytoplasm. The enzyme catalyses dTTP + H2O = dTMP + diphosphate + H(+). It catalyses the reaction UTP + H2O = UMP + diphosphate + H(+). Functionally, nucleoside triphosphate pyrophosphatase that hydrolyzes dTTP and UTP. May have a dual role in cell division arrest and in preventing the incorporation of modified nucleotides into cellular nucleic acids. The sequence is that of dTTP/UTP pyrophosphatase from Bordetella pertussis (strain Tohama I / ATCC BAA-589 / NCTC 13251).